The sequence spans 321 residues: tRNA dimethylallyltransferase (321 aa).

24-31 contacts ATP; sequence GPTASGKS. Residue 26-31 coordinates substrate; sequence TASGKS. Interaction with substrate tRNA regions lie at residues 49–52 and 172–176; these read DSMQ and QRIVR.

Belongs to the IPP transferase family. In terms of assembly, monomer. Requires Mg(2+) as cofactor.

The enzyme catalyses adenosine(37) in tRNA + dimethylallyl diphosphate = N(6)-dimethylallyladenosine(37) in tRNA + diphosphate. Functionally, catalyzes the transfer of a dimethylallyl group onto the adenine at position 37 in tRNAs that read codons beginning with uridine, leading to the formation of N6-(dimethylallyl)adenosine (i(6)A). This chain is tRNA dimethylallyltransferase, found in Mesorhizobium japonicum (strain LMG 29417 / CECT 9101 / MAFF 303099) (Mesorhizobium loti (strain MAFF 303099)).